A 410-amino-acid polypeptide reads, in one-letter code: MVLSQRQRDELNRAIADYLRSNGYEEAYSVFKKEAELDMNEELDKKYAGLLEKKWTSVIRLQKKVMELESKLNEAKEEFTSGGPLGQKRDPKEWIPRPPEKYALSGHRSPVTRVIFHPVFSVMVSASEDATIKVWDYETGDFERTLKGHTDSVQDISFDHSGKLLASCSADMTIKLWDFQGFECIRTMHGHDHNVSSVAIMPNGDHIVSAARDKTIKMWEVQTGYCVKTFTGHREWVRMVRPNQDGTLIASCSNDQTVRVWVVATKECKAELREHEHVVECISWAPESSYSSISEATGSETKKSGKPGPFLLSGSRDKTIKMWDVSTGMCLMTLVGHDNWVRGVLFHSGGKFILSCADDKTLRVWDYKNKRCMKTLNAHEHFVTSLDFHKTAPYVVTGSVDQTVKVWECR.

The tract at residues 1 to 38 (MVLSQRQRDELNRAIADYLRSNGYEEAYSVFKKEAELD) is required for self-association and interaction with PAFAH1B2 and PAFAH1B3. Residues 1–66 (MVLSQRQRDE…SVIRLQKKVM (66 aa)) form an interaction with NDE1 region. The tract at residues 1–102 (MVLSQRQRDE…EWIPRPPEKY (102 aa)) is interaction with NDEL1. Residues 7 to 39 (QRDELNRAIADYLRSNGYEEAYSVFKKEAELDM) enclose the LisH domain. At Lys53 the chain carries N6-acetyllysine. Residues 56–82 (TSVIRLQKKVMELESKLNEAKEEFTSG) are a coiled coil. Residues 83 to 410 (GPLGQKRDPK…DQTVKVWECR (328 aa)) form an interaction with dynein and dynactin region. WD repeat units lie at residues 106 to 147 (GHRS…RTLK), 148 to 187 (GHTDSVQDISFDHSGKLLASCSADMTIKLWDFQGFECIRT), 190 to 229 (GHDHNVSSVAIMPNGDHIVSAARDKTIKMWEVQTGYCVKT), 232 to 271 (GHREWVRMVRPNQDGTLIASCSNDQTVRVWVVATKECKAE), 274 to 333 (EHEH…CLMT), 336 to 377 (GHDN…KTLN), and 378 to 410 (AHEHFVTSLDFHKTAPYVVTGSVDQTVKVWECR). Ser109 bears the Phosphoserine mark. An interaction with DCX region spans residues 367 to 409 (YKNKRCMKTLNAHEHFVTSLDFHKTAPYVVTGSVDQTVKVWEC). The segment at 388-410 (FHKTAPYVVTGSVDQTVKVWECR) is interaction with NDEL1.

This sequence belongs to the WD repeat LIS1/nudF family. As to quaternary structure, can self-associate. Component of the cytosolic PAF-AH (I) heterotetrameric enzyme, which is composed of PAFAH1B1 (beta), PAFAH1B2 (alpha2) and PAFAH1B3 (alpha1) subunits. The catalytic activity of the enzyme resides in the alpha1 (PAFAH1B3) and alpha2 (PAFAH1B2) subunits, whereas the beta subunit (PAFAH1B1) has regulatory activity. Trimer formation is not essential for the catalytic activity. Interacts with the catalytic dimer of PAF-AH (I) heterotetrameric enzyme: interacts with PAFAH1B2 homodimer (alpha2/alpha2 homodimer), PAFAH1B3 homodimer (alpha1/alpha1 homodimer) and PAFAH1B2-PAFAH1B3 heterodimer (alpha2/alpha1 heterodimer). Interacts with DCX, dynein, dynactin, IQGAP1, KATNB1, NDE1, NDEL1, NUDC and RSN. Interacts with DISC1, and this interaction is enhanced by NDEL1. Interacts with DAB1 when DAB1 is phosphorylated in response to RELN/reelin signaling. Interacts with INTS13. Interacts with DCDC1.

The protein resides in the cytoplasm. Its subcellular location is the cytoskeleton. It localises to the microtubule organizing center. The protein localises to the centrosome. It is found in the spindle. The protein resides in the nucleus membrane. Functionally, regulatory subunit (beta subunit) of the cytosolic type I platelet-activating factor (PAF) acetylhydrolase (PAF-AH (I)), an enzyme that catalyzes the hydrolyze of the acetyl group at the sn-2 position of PAF and its analogs and participates in PAF inactivation. Regulates the PAF-AH (I) activity in a catalytic dimer composition-dependent manner. Positively regulates the activity of the minus-end directed microtubule motor protein dynein. May enhance dynein-mediated microtubule sliding by targeting dynein to the microtubule plus end. Required for several dynein- and microtubule-dependent processes such as the maintenance of Golgi integrity, the peripheral transport of microtubule fragments and the coupling of the nucleus and centrosome. Required during brain development for the proliferation of neuronal precursors and the migration of newly formed neurons from the ventricular/subventricular zone toward the cortical plate. Neuronal migration involves a process called nucleokinesis, whereby migrating cells extend an anterior process into which the nucleus subsequently translocates. During nucleokinesis dynein at the nuclear surface may translocate the nucleus towards the centrosome by exerting force on centrosomal microtubules. Also required for proper activation of Rho GTPases and actin polymerization at the leading edge of locomoting cerebellar neurons and postmigratory hippocampal neurons in response to calcium influx triggered via NMDA receptors. May also play a role in other forms of cell locomotion including the migration of fibroblasts during wound healing. Required for dynein recruitment to microtubule plus ends and BICD2-bound cargos. May modulate the Reelin pathway through interaction of the PAF-AH (I) catalytic dimer with VLDLR. The polypeptide is Platelet-activating factor acetylhydrolase IB subunit alpha (Sus scrofa (Pig)).